We begin with the raw amino-acid sequence, 217 residues long: KH domain-containing protein 3 (217 aa).

The involved in RNA binding stretch occupies residues 1-40 (MDAPRRFPTLVQLMQPKAMPVEVLGHLPKRFSWFHSEFLK). The KH; atypical domain occupies 40–103 (KNPKVVRLEV…SYQEDTIKMI (64 aa)). Residues 129-217 (QKAETQRSSI…EDARDPVTRL (89 aa)) form a disordered region. Basic and acidic residues predominate over residues 138 to 155 (IEVREAGTQRSVEVREAG). Phosphothreonine; by ATM occurs at positions 145 and 156. Polar residues-rich tracts occupy residues 156 to 170 (TQRS…TQGS) and 177 to 194 (AGTQ…TQRS). At S182 the chain carries Phosphoserine. Residues 205 to 217 (RFREDARDPVTRL) show a composition bias toward basic and acidic residues.

It belongs to the KHDC1 family. Component of the subcortical maternal complex (SCMC), at least composed of NLRP5, KHDC3L, OOEP, and TLE6 isoform 1. Within the complex, interacts with NLRP5, KHDC3L and TLE6 isoform 1. The SCMC may facilitate translocation of its components between the nuclear and cytoplasmic compartments. Forms a scaffold complex with OOEP/FLOPED, and interacts with BLM and TRIM25 at DNA replication forks. Interacts with PARP1; the interaction is increased following the formation of DNA double-strand breaks. Interacts with NUMA1. Expression appears to be maximal in germinal vesicle oocytes, it tails off through metaphase II oocytes and is undetectable following the completion of the oocyte to embryo transition.

It is found in the cytoplasm. It localises to the cell cortex. The protein localises to the nucleus. The protein resides in the mitochondrion. Its subcellular location is the cytoskeleton. It is found in the microtubule organizing center. It localises to the centrosome. The protein localises to the chromosome. Its function is as follows. Component of the subcortical maternal complex (SCMC), a multiprotein complex that plays a key role in early embryonic development. The SCMC complex is a structural constituent of cytoplasmic lattices, which consist in fibrous structures found in the cytoplasm of oocytes and preimplantation embryos. They are required to store maternal proteins critical for embryonic development, such as proteins that control epigenetic reprogramming of the preimplantation embryo, and prevent their degradation or activation. KHDC3 ensures proper spindle assembly by regulating the localization of AURKA via RHOA signaling and of PLK1 via a RHOA-independent process. Required for the localization of MAD2L1 to kinetochores to enable spindle assembly checkpoint function. As part of the OOEP-KHDC3 scaffold, recruits BLM and TRIM25 to DNA replication forks, thereby promoting the ubiquitination of BLM by TRIM25, enhancing BLM retainment at replication forks and therefore promoting stalled replication fork restart. Regulates homologous recombination-mediated DNA repair via recruitment of RAD51 to sites of DNA double-strand breaks, and sustainment of PARP1 activity, which in turn modulates downstream ATM or ATR activation. Activation of ATM or ATR in response to DNA double-strand breaks may be cell-type specific. Its role in DNA double-strand break repair is independent of its role in restarting stalled replication forks. Promotes neural stem cell neurogenesis and neuronal differentiation in the hippocampus. May regulate normal development of learning, memory and anxiety. Capable of binding RNA. The polypeptide is KH domain-containing protein 3 (Homo sapiens (Human)).